Reading from the N-terminus, the 177-residue chain is Tubulin beta chain (177 aa).

The segment at 156 to 177 is disordered; sequence YQDATAEEEGEFDEEEGDEEAA. The segment covering 160–177 has biased composition (acidic residues); it reads TAEEEGEFDEEEGDEEAA.

The protein belongs to the tubulin family. In terms of assembly, dimer of alpha and beta chains. A typical microtubule is a hollow water-filled tube with an outer diameter of 25 nm and an inner diameter of 15 nM. Alpha-beta heterodimers associate head-to-tail to form protofilaments running lengthwise along the microtubule wall with the beta-tubulin subunit facing the microtubule plus end conferring a structural polarity. Microtubules usually have 13 protofilaments but different protofilament numbers can be found in some organisms and specialized cells. Mg(2+) is required as a cofactor.

It is found in the cytoplasm. The protein resides in the cytoskeleton. Its function is as follows. Tubulin is the major constituent of microtubules, a cylinder consisting of laterally associated linear protofilaments composed of alpha- and beta-tubulin heterodimers. Microtubules grow by the addition of GTP-tubulin dimers to the microtubule end, where a stabilizing cap forms. Below the cap, tubulin dimers are in GDP-bound state, owing to GTPase activity of alpha-tubulin. The polypeptide is Tubulin beta chain (Lytechinus pictus (Painted sea urchin)).